A 198-amino-acid polypeptide reads, in one-letter code: Transcription factor FapR (198 aa).

One can recognise a MaoC-like domain in the interval 102-168; the sequence is TRIARGHHLF…GRTVVDVNSY (67 aa).

This sequence belongs to the FapR family.

In terms of biological role, transcriptional factor involved in regulation of membrane lipid biosynthesis by repressing genes involved in fatty acid and phospholipid metabolism. The protein is Transcription factor FapR of Geobacillus thermodenitrificans (strain NG80-2).